The primary structure comprises 343 residues: Aspartate carbamoyltransferase catalytic subunit (343 aa).

Carbamoyl phosphate contacts are provided by arginine 91 and threonine 92. An L-aspartate-binding site is contributed by lysine 119. Residues arginine 141, histidine 171, and glutamine 174 each coordinate carbamoyl phosphate. The L-aspartate site is built by arginine 204 and arginine 259. Carbamoyl phosphate contacts are provided by glycine 300 and proline 301.

The protein belongs to the aspartate/ornithine carbamoyltransferase superfamily. ATCase family. Heterododecamer (2C3:3R2) of six catalytic PyrB chains organized as two trimers (C3), and six regulatory PyrI chains organized as three dimers (R2).

It carries out the reaction carbamoyl phosphate + L-aspartate = N-carbamoyl-L-aspartate + phosphate + H(+). The protein operates within pyrimidine metabolism; UMP biosynthesis via de novo pathway; (S)-dihydroorotate from bicarbonate: step 2/3. Its function is as follows. Catalyzes the condensation of carbamoyl phosphate and aspartate to form carbamoyl aspartate and inorganic phosphate, the committed step in the de novo pyrimidine nucleotide biosynthesis pathway. The chain is Aspartate carbamoyltransferase catalytic subunit from Burkholderia orbicola (strain MC0-3).